The following is a 178-amino-acid chain: Large ribosomal subunit protein uL6 (178 aa).

Belongs to the universal ribosomal protein uL6 family. As to quaternary structure, part of the 50S ribosomal subunit.

Functionally, this protein binds to the 23S rRNA, and is important in its secondary structure. It is located near the subunit interface in the base of the L7/L12 stalk, and near the tRNA binding site of the peptidyltransferase center. The protein is Large ribosomal subunit protein uL6 of Frankia alni (strain DSM 45986 / CECT 9034 / ACN14a).